Reading from the N-terminus, the 1930-residue chain is Myosin-16 (1930 aa).

One can recognise a Myosin N-terminal SH3-like domain in the interval 35–84; sequence DIKKSCWVKDEKEGFIAGEIQSEQGDQVTVKTVNNQTVTVKKDDVQQMNP. The region spanning 88 to 774 is the Myosin motor domain; it reads YQASDMADMT…ILAKLEDMRD (687 aa). 181-188 is an ATP binding site; it reads GESGAGKT. 2 actin-binding regions span residues 652–674 and 753–767; these read LNKL…VPNE and KIGH…GILA. The IQ domain maps to 777–806; it reads LAKIMTMLQCRLRGFLMRIEFKKMLERRIG. Positions 835–1921 form a coiled coil; that stretch reads LLNVARQEEE…ALNKLRTRHR (1087 aa). Residues 1116 to 1137 are disordered; sequence EELEAERSMRAKVEKQRSDLSR. Over residues 1120–1137 the composition is skewed to basic and acidic residues; the sequence is AERSMRAKVEKQRSDLSR.

The protein belongs to the TRAFAC class myosin-kinesin ATPase superfamily. Myosin family.

The protein localises to the cytoplasm. The protein resides in the myofibril. Its function is as follows. May play a role in masticatory muscles contraction. This chain is Myosin-16, found in Canis lupus familiaris (Dog).